We begin with the raw amino-acid sequence, 354 residues long: Membrane progestin receptor beta (354 aa).

Topologically, residues 1-75 are cytoplasmic; that stretch reads MTTAILERLS…FFSLFQKHNE (75 aa). Residues 76 to 96 form a helical membrane-spanning segment; it reads VVNVWTHLLAALAVLLRFWAF. The Extracellular segment spans residues 97–111; that stretch reads AEAEALPWASTHSLP. The helical transmembrane segment at 112–132 threads the bilayer; it reads LLLFILSSITYLTCSLLAHLL. The Cytoplasmic portion of the chain corresponds to 133–174; the sequence is QSKSELSHYTFYFVDYVGVSVYQYGSALAHFFYSSDQAWYDR. A helical membrane pass occupies residues 175–195; the sequence is FWLFFLPAAAFCGWLSCAGCC. Over 196–213 the chain is Extracellular; it reads YAKYRYRRPYPVMRKICQ. The helical transmembrane segment at 214–234 threads the bilayer; that stretch reads VVPAGLAFILDISPVAHRVAL. Topologically, residues 235–243 are cytoplasmic; the sequence is CHLAGCQEQ. A helical transmembrane segment spans residues 244-264; it reads AAWYHTLQILFFLVSAYFFSC. Residues 265-283 lie on the Extracellular side of the membrane; it reads PVPEKYFPGSCDIVGHGHQ. A helical transmembrane segment spans residues 284–304; the sequence is IFHAFLSICTLSQLEAILLDY. The Cytoplasmic segment spans residues 305–319; sequence QGRQEIFLQRHGPLS. Residues 320–340 traverse the membrane as a helical segment; sequence VHMACLSFFFLAACSAATAAL. The Extracellular segment spans residues 341–354; the sequence is LRHKVKARLTKKDS.

Belongs to the ADIPOR family. In terms of tissue distribution, highly expressed in the hypothalamus. Also expressed in spinal cord, kidney and testis.

The protein resides in the cell membrane. Plasma membrane progesterone (P4) receptor coupled to G proteins. Seems to act through a G(i) mediated pathway. May be involved in oocyte maturation. Also binds dehydroepiandrosterone (DHEA), pregnanolone, pregnenolone and allopregnanolone. This Homo sapiens (Human) protein is Membrane progestin receptor beta.